The primary structure comprises 228 residues: Large ribosomal subunit protein bL25 (228 aa).

The disordered stretch occupies residues 198–228 (AAIAEAQSAEAAEEKAEAEAEATNEKNDTEE). A compositionally biased stretch (basic and acidic residues) spans 209–228 (AEEKAEAEAEATNEKNDTEE).

This sequence belongs to the bacterial ribosomal protein bL25 family. CTC subfamily. As to quaternary structure, part of the 50S ribosomal subunit; part of the 5S rRNA/L5/L18/L25 subcomplex. Contacts the 5S rRNA. Binds to the 5S rRNA independently of L5 and L18.

Its function is as follows. This is one of the proteins that binds to the 5S RNA in the ribosome where it forms part of the central protuberance. The polypeptide is Large ribosomal subunit protein bL25 (Methylorubrum populi (strain ATCC BAA-705 / NCIMB 13946 / BJ001) (Methylobacterium populi)).